A 239-amino-acid chain; its full sequence is Pyrroloquinoline-quinone synthase (239 aa).

This sequence belongs to the PqqC family.

The catalysed reaction is 6-(2-amino-2-carboxyethyl)-7,8-dioxo-1,2,3,4,7,8-hexahydroquinoline-2,4-dicarboxylate + 3 O2 = pyrroloquinoline quinone + 2 H2O2 + 2 H2O + H(+). The protein operates within cofactor biosynthesis; pyrroloquinoline quinone biosynthesis. In terms of biological role, ring cyclization and eight-electron oxidation of 3a-(2-amino-2-carboxyethyl)-4,5-dioxo-4,5,6,7,8,9-hexahydroquinoline-7,9-dicarboxylic-acid to PQQ. In Gluconobacter oxydans (strain 621H) (Gluconobacter suboxydans), this protein is Pyrroloquinoline-quinone synthase.